A 717-amino-acid polypeptide reads, in one-letter code: Fatty acid oxidation complex subunit alpha (717 aa).

The enoyl-CoA hydratase/isomerase stretch occupies residues 1–189 (MIYQSPTIEV…KVGAIDAVVA (189 aa)). Asp296 is a binding site for substrate. Positions 311–717 (KKVNSAAVLG…ANNGSYYQQA (407 aa)) are 3-hydroxyacyl-CoA dehydrogenase. Residues Met324, Asp343, 400 to 402 (VVE), Lys407, and Ser429 contribute to the NAD(+) site. Catalysis depends on His450, which acts as the For 3-hydroxyacyl-CoA dehydrogenase activity. Asn453 contacts NAD(+). Substrate-binding residues include Asn500 and Tyr660.

It in the N-terminal section; belongs to the enoyl-CoA hydratase/isomerase family. In the C-terminal section; belongs to the 3-hydroxyacyl-CoA dehydrogenase family. Heterotetramer of two alpha chains (FadB) and two beta chains (FadA).

It catalyses the reaction a (3S)-3-hydroxyacyl-CoA + NAD(+) = a 3-oxoacyl-CoA + NADH + H(+). The catalysed reaction is a (3S)-3-hydroxyacyl-CoA = a (2E)-enoyl-CoA + H2O. It carries out the reaction a 4-saturated-(3S)-3-hydroxyacyl-CoA = a (3E)-enoyl-CoA + H2O. The enzyme catalyses (3S)-3-hydroxybutanoyl-CoA = (3R)-3-hydroxybutanoyl-CoA. It catalyses the reaction a (3Z)-enoyl-CoA = a 4-saturated (2E)-enoyl-CoA. The catalysed reaction is a (3E)-enoyl-CoA = a 4-saturated (2E)-enoyl-CoA. The protein operates within lipid metabolism; fatty acid beta-oxidation. Involved in the aerobic and anaerobic degradation of long-chain fatty acids via beta-oxidation cycle. Catalyzes the formation of 3-oxoacyl-CoA from enoyl-CoA via L-3-hydroxyacyl-CoA. It can also use D-3-hydroxyacyl-CoA and cis-3-enoyl-CoA as substrate. The chain is Fatty acid oxidation complex subunit alpha from Shewanella halifaxensis (strain HAW-EB4).